The chain runs to 229 residues: Heptaprenylglyceryl phosphate synthase (229 aa).

K12 lines the sn-glycerol 1-phosphate pocket. Mg(2+)-binding residues include D14 and S40. Sn-glycerol 1-phosphate-binding positions include 159–164 (YLEYSG), G189, and 209–210 (GN).

It belongs to the GGGP/HepGP synthase family. Group I subfamily. Homodimer. Requires Mg(2+) as cofactor.

The enzyme catalyses sn-glycerol 1-phosphate + all-trans-heptaprenyl diphosphate = 3-heptaprenyl-sn-glycero-1-phosphate + diphosphate. It participates in membrane lipid metabolism; glycerophospholipid metabolism. Its function is as follows. Prenyltransferase that catalyzes in vivo the transfer of the heptaprenyl moiety of heptaprenyl pyrophosphate (HepPP; 35 carbon atoms) to the C3 hydroxyl of sn-glycerol-1-phosphate (G1P), producing heptaprenylglyceryl phosphate (HepGP). This reaction is an ether-bond-formation step in the biosynthesis of archaea-type G1P-based membrane lipids found in Bacillales. This chain is Heptaprenylglyceryl phosphate synthase, found in Bacillus cereus (strain AH187).